The following is a 123-amino-acid chain: Large ribosomal subunit protein bL12 (123 aa).

The protein belongs to the bacterial ribosomal protein bL12 family. In terms of assembly, homodimer. Part of the ribosomal stalk of the 50S ribosomal subunit. Forms a multimeric L10(L12)X complex, where L10 forms an elongated spine to which 2 to 4 L12 dimers bind in a sequential fashion. Binds GTP-bound translation factors.

Its function is as follows. Forms part of the ribosomal stalk which helps the ribosome interact with GTP-bound translation factors. Is thus essential for accurate translation. The sequence is that of Large ribosomal subunit protein bL12 from Bartonella quintana (strain Toulouse) (Rochalimaea quintana).